An 80-amino-acid chain; its full sequence is MELADRAVGLLLSSISLSIFTYYTFWVIILPFVDSDHFIHKYFLPQDYAILVPVFAGIALLSLISVFIGMVMLKSKKKKA.

Transmembrane regions (helical) follow at residues 10–30 (LLLSSISLSIFTYYTFWVIIL) and 50–70 (ILVPVFAGIALLSLISVFIGM).

Belongs to the DPM2 family. In terms of assembly, component of the dolichol-phosphate mannose (DPM) synthase complex composed of DPMS1, DPMS2 and DPMS3; in the complex interacts directly with DPMS3. Associates with the GPI-GlcNAc transferase (GPI-GnT) complex.

It is found in the endoplasmic reticulum membrane. It participates in protein modification; protein glycosylation. In terms of biological role, regulates the biosynthesis of dolichol phosphate-mannose. Regulatory subunit of the dolichol-phosphate mannose (DPM) synthase complex; essential for the ER localization and stable expression of DPMS1. The sequence is that of Dolichol-phosphate mannose synthase subunit 2 from Arabidopsis thaliana (Mouse-ear cress).